We begin with the raw amino-acid sequence, 1244 residues long: Actin cytoskeleton-regulatory complex protein SLA1 (1244 aa).

2 SH3 domains span residues 3-68 (VFLG…IEEA) and 69-132 (PVLK…PENG). Disordered stretches follow at residues 128–248 (EPEN…GNHE) and 415–497 (DKKH…PKKS). The segment covering 140-159 (APAAAEAPAATPAAAPASAA) has biased composition (low complexity). The segment covering 171–184 (HNDRARMMQSKEDQ) has biased composition (basic and acidic residues). Low complexity predominate over residues 199–214 (ARPTATTETTDATAAA). Positions 226 to 235 (NDNDDEEDDY) are enriched in acidic residues. One can recognise an SH3 3 domain in the interval 353-415 (KSKKRGIVQY…PAQFIEPVRD (63 aa)). Basic residues predominate over residues 429–447 (SIKKNFTKSPSRSRSRSRS). Phosphoserine is present on residues Ser-447, Ser-449, and Ser-454. Glycyl lysine isopeptide (Lys-Gly) (interchain with G-Cter in ubiquitin) cross-links involve residues Lys-471 and Lys-548. A compositionally biased stretch (basic residues) spans 471 to 484 (KRSRKSSLSSHKKN). Disordered regions lie at residues 558–592 (KAND…RDRR), 610–649 (EERS…SNNN), and 726–791 (PTNA…NLLS). Basic and acidic residues-rich tracts occupy residues 568–592 (TDSR…RDRR) and 610–621 (EERSRLQEKELP). A compositionally biased stretch (low complexity) spans 629–649 (TSTTSVPNTTSVPPAESSNNN). Residues 726–756 (PTNATGNMFSQPDGSLNVATSPETSLPQQLL) are compositionally biased toward polar residues. Residues 757-771 (PQTTSPAQTAPSTSA) show a composition bias toward low complexity. Ser-799 is modified (phosphoserine). A disordered region spans residues 813–853 (KAAASTPEPNLKDLEPVKTGGTTVPAAPVSSAPVSSAPAPL). Thr-831 bears the Phosphothreonine mark. Over residues 836-851 (VPAAPVSSAPVSSAPA) the composition is skewed to low complexity. A Phosphothreonine modification is found at Thr-858. Tandem repeats lie at residues 868–874 (TGFVMMP), 877–883 (TGGDMLP), and 887–893 (TGGFVVP). The 16 X 7 AA approximate repeats of T-G-G-A-M-M-P stretch occupies residues 868–1205 (TGFVMMPMIT…NTFNTGGAMQ (338 aa)). A phosphothreonine mark is found at Thr-887 and Thr-904. A run of 2 repeats spans residues 923-929 (TGGAMMP) and 945-951 (TGGGLIP). Phosphothreonine is present on residues Thr-984 and Thr-993. At Ser-996 the chain carries Phosphoserine. 5 tandem repeats follow at residues 1003–1009 (TGGTMIP), 1020–1026 (TGGAMMT), 1031–1037 (TGSAMMP), 1048–1054 (TGGAMMP), and 1065–1071 (TGGAMMP). Thr-1075 carries the phosphothreonine modification. Tandem repeats lie at residues 1084-1090 (TGGAMIP), 1129-1135 (TGGAMNT), 1155-1161 (TGGVMQE), 1170-1176 (TGGAMQQ), 1185-1191 (TDGIMQQ), and 1200-1206 (TGGAMQQ).

It belongs to the SLA1 family. As to quaternary structure, component of the PAN1 actin cytoskeleton-regulatory complex. Interacts with ABP1, KRE6, LAS17, LSB5, RSP5, RVS167, VPS1 and YSC84. Phosphorylated by PRK1.

It localises to the nucleus. Its subcellular location is the cell membrane. The protein localises to the endosome membrane. The protein resides in the cytoplasm. It is found in the cytoskeleton. It localises to the actin patch. Component of the PAN1 actin cytoskeleton-regulatory complex required for the internalization of endosomes during actin-coupled endocytosis. The complex links the site of endocytosis to the cell membrane-associated actin cytoskeleton. Mediates uptake of external molecules and vacuolar degradation of plasma membrane proteins. Plays a role in the proper organization of the cell membrane-associated actin cytoskeleton and promotes its destabilization. This chain is Actin cytoskeleton-regulatory complex protein SLA1 (SLA1), found in Saccharomyces cerevisiae (strain ATCC 204508 / S288c) (Baker's yeast).